The sequence spans 501 residues: uncharacterized protein (501 aa).

7 consecutive transmembrane segments (helical) span residues 14-34 (AIFI…SGSV), 73-93 (FILF…LGYM), 111-131 (IFGI…ICIF), 197-217 (FIIA…VLLI), 274-294 (ILLS…YYFG), 297-317 (FNLI…YNLI), and 466-486 (FLVL…RLIL).

Its subcellular location is the membrane. This is an uncharacterized protein from Dictyostelium discoideum (Social amoeba).